The following is a 222-amino-acid chain: Phosphoenolpyruvate guanylyltransferase (222 aa).

The phosphoenolpyruvate site is built by threonine 147, glycine 163, and serine 166.

It belongs to the CofC family.

It carries out the reaction phosphoenolpyruvate + GTP + H(+) = enolpyruvoyl-2-diphospho-5'-guanosine + diphosphate. It functions in the pathway cofactor biosynthesis; coenzyme F420 biosynthesis. Functionally, guanylyltransferase that catalyzes the activation of phosphoenolpyruvate (PEP) as enolpyruvoyl-2-diphospho-5'-guanosine, via the condensation of PEP with GTP. It is involved in the biosynthesis of coenzyme F420, a hydride carrier cofactor. This Streptosporangium roseum (strain ATCC 12428 / DSM 43021 / JCM 3005 / KCTC 9067 / NCIMB 10171 / NRRL 2505 / NI 9100) protein is Phosphoenolpyruvate guanylyltransferase.